Here is a 99-residue protein sequence, read N- to C-terminus: Integration host factor subunit alpha (99 aa).

The disordered stretch occupies residues 49 to 75; the sequence is FGNFDLRDKNQRPGRNPKTGEDIPITA.

This sequence belongs to the bacterial histone-like protein family. In terms of assembly, heterodimer of an alpha and a beta chain.

Its function is as follows. This protein is one of the two subunits of integration host factor, a specific DNA-binding protein that functions in genetic recombination as well as in transcriptional and translational control. The protein is Integration host factor subunit alpha of Salmonella agona (strain SL483).